We begin with the raw amino-acid sequence, 159 residues long: Dehydratase GME11372 (159 aa).

Residues histidine 79 and histidine 104 contribute to the active site.

This sequence belongs to the scytalone dehydratase family. Homotrimer. Each subunit contains an active site, located in the central part of the hydrophobic core of the monomer, which functions independently.

Its pathway is secondary metabolite biosynthesis. Dehydratase; part of the gene cluster that mediates the biosynthesis of dibenzodioxocinones such as pestalotiollide B, a novel class of inhibitors against cholesterol ester transfer protein (CEPT). The biosynthesis initiates from condensation of acetate and malonate units catalyzed by the non-reducing PKS pks8/GME11356. Pks8/GME11356 lacks a thioesterase (TE) domain, which is important to the cyclizing of the third ring of atrochrysone carboxylic acid, and the esterase GME11355 might play the role of TE and catalyzes the cyclization reaction of the C ring. The lactamase-like protein GME11357 (or other beta-lactamases in Pestalotiopsis microspora) probably hydrolyzes the thioester bond between the ACP of pks8/GME11356 and the intermediate to release atrochrysone carboxylic acid, which is spontaneously dehydrates to form endocrocin anthrone. Endocrocin anthrone is further converted to emodin via the endocrocin intermediate. Emodin is then oxidized by several enzymes such as the Baeyer-Villiger oxidase GME11358, the oxidoreductase GME11367, the short chain dehydrogenase/reductase GME11373, as well as by other oxidoreductases from the cluster, to modify the A and C rings and open the B ring, and finally yield monodictyphenone. The prenyltransferase GME11375 may catalyze the addition reaction between the C5 side chains and the carbon bone of dibenzodioxocinones. The remaining biochemical reactions to the final product dibenzodioxocinones should be methylation catalyzed by methyltransferase GME11366 and reduction and lactonization reaction catalyzed by a series of oxidordeuctases. This chain is Dehydratase GME11372, found in Pestalotiopsis microspora.